The chain runs to 242 residues: Ubiquinone biosynthesis O-methyltransferase (242 aa).

Positions 44, 64, 85, and 129 each coordinate S-adenosyl-L-methionine.

Belongs to the methyltransferase superfamily. UbiG/COQ3 family.

It carries out the reaction a 3-demethylubiquinol + S-adenosyl-L-methionine = a ubiquinol + S-adenosyl-L-homocysteine + H(+). The enzyme catalyses a 3-(all-trans-polyprenyl)benzene-1,2-diol + S-adenosyl-L-methionine = a 2-methoxy-6-(all-trans-polyprenyl)phenol + S-adenosyl-L-homocysteine + H(+). The protein operates within cofactor biosynthesis; ubiquinone biosynthesis. In terms of biological role, O-methyltransferase that catalyzes the 2 O-methylation steps in the ubiquinone biosynthetic pathway. This is Ubiquinone biosynthesis O-methyltransferase from Salmonella paratyphi A (strain ATCC 9150 / SARB42).